We begin with the raw amino-acid sequence, 84 residues long: Putative defensin-like protein 165 (84 aa).

Positions 1 to 27 are cleaved as a signal peptide; it reads MSTKLFSYFMLLVVLFSVLTIIPKTEA. Disulfide bonds link Cys31-Cys78, Cys41-Cys60, Cys46-Cys72, and Cys50-Cys74.

This sequence belongs to the DEFL family.

The protein resides in the secreted. In Arabidopsis thaliana (Mouse-ear cress), this protein is Putative defensin-like protein 165 (LCR12).